The primary structure comprises 344 residues: Histone-lysine N-methyltransferase, H3 lysine-9 specific KMT1 (344 aa).

The region spanning 79–174 is the Pre-SET domain; that stretch reads SGCSCAKDSE…DCPNRVVERG (96 aa). Positions 81, 83, 89, 94, 96, 156, 160, 162, 166, and 272 each coordinate Zn(2+). An SET domain is found at 177-312; the sequence is IPLEIFRTPD…EGEELTFDYV (136 aa). Residue tyrosine 311 participates in S-adenosyl-L-methionine binding. The Post-SET domain maps to 328 to 344; the sequence is HMTRCLCGSKKCRKFLW. Zn(2+) is bound by residues cysteine 332, cysteine 334, and cysteine 339.

It belongs to the class V-like SAM-binding methyltransferase superfamily.

Its subcellular location is the chromosome. It carries out the reaction L-lysyl(9)-[histone H3] + 3 S-adenosyl-L-methionine = N(6),N(6),N(6)-trimethyl-L-lysyl(9)-[histone H3] + 3 S-adenosyl-L-homocysteine + 3 H(+). In terms of biological role, histone methyltransferase that specifically trimethylates histone H3 to form H3K9me3. H3K9me3 marks chromatin regions for DNA methylation. Plays a key role in the regulation of the biosynthesis of the gamma-pyrones fusapyrone (FPY) and deoxyfusapyrone (dFPY). This Fusarium mangiferae (Mango malformation disease fungus) protein is Histone-lysine N-methyltransferase, H3 lysine-9 specific KMT1.